A 509-amino-acid polypeptide reads, in one-letter code: Putative aldehyde dehydrogenase family 7 member A1 homolog (509 aa).

An NAD(+)-binding site is contributed by 244 to 249; that stretch reads GSTEVG. Catalysis depends on E266, which acts as the Proton acceptor. The active-site Nucleophile is the C300.

The protein belongs to the aldehyde dehydrogenase family. As to quaternary structure, homotetramer.

It catalyses the reaction an aldehyde + NAD(+) + H2O = a carboxylate + NADH + 2 H(+). The protein is Putative aldehyde dehydrogenase family 7 member A1 homolog of Dictyostelium discoideum (Social amoeba).